The following is a 733-amino-acid chain: 1,4-alpha-glucan branching enzyme GlgB (733 aa).

Aspartate 409 (nucleophile) is an active-site residue. Glutamate 462 (proton donor) is an active-site residue.

It belongs to the glycosyl hydrolase 13 family. GlgB subfamily. Monomer.

The catalysed reaction is Transfers a segment of a (1-&gt;4)-alpha-D-glucan chain to a primary hydroxy group in a similar glucan chain.. It participates in glycan biosynthesis; glycogen biosynthesis. In terms of biological role, catalyzes the formation of the alpha-1,6-glucosidic linkages in glycogen by scission of a 1,4-alpha-linked oligosaccharide from growing alpha-1,4-glucan chains and the subsequent attachment of the oligosaccharide to the alpha-1,6 position. The protein is 1,4-alpha-glucan branching enzyme GlgB of Gloeobacter violaceus (strain ATCC 29082 / PCC 7421).